The following is a 209-amino-acid chain: Protein-L-isoaspartate O-methyltransferase (209 aa).

Residue Ser55 is part of the active site.

It belongs to the methyltransferase superfamily. L-isoaspartyl/D-aspartyl protein methyltransferase family.

Its subcellular location is the cytoplasm. The enzyme catalyses [protein]-L-isoaspartate + S-adenosyl-L-methionine = [protein]-L-isoaspartate alpha-methyl ester + S-adenosyl-L-homocysteine. In terms of biological role, catalyzes the methyl esterification of L-isoaspartyl residues in peptides and proteins that result from spontaneous decomposition of normal L-aspartyl and L-asparaginyl residues. It plays a role in the repair and/or degradation of damaged proteins. The protein is Protein-L-isoaspartate O-methyltransferase of Anaeromyxobacter dehalogenans (strain 2CP-1 / ATCC BAA-258).